Reading from the N-terminus, the 585-residue chain is CTP synthase (585 aa).

The tract at residues 1–281 (MPALRKHPHT…DAYVVRRLNL (281 aa)) is amidoligase domain. Ser23 is a CTP binding site. Ser23 contacts UTP. ATP is bound by residues 24–29 (SLGKGL) and Asp81. The Mg(2+) site is built by Asp81 and Glu155. CTP contacts are provided by residues 162 to 164 (DIE), 202 to 207 (KTKPTQ), and Lys238. UTP contacts are provided by residues 202-207 (KTKPTQ) and Lys238. In terms of domain architecture, Glutamine amidotransferase type-1 spans 306–554 (RIALVGKYID…VGAAVEYNNG (249 aa)). Gly369 contributes to the L-glutamine binding site. Residue Cys396 is the Nucleophile; for glutamine hydrolysis of the active site. L-glutamine is bound by residues 397–400 (LGLQ), Glu419, and Arg480. Catalysis depends on residues His527 and Glu529. Positions 564–585 (IPTADHQSNGAEHALEDAPARG) are disordered. Residues 576-585 (HALEDAPARG) are compositionally biased toward basic and acidic residues.

This sequence belongs to the CTP synthase family. Homotetramer.

It catalyses the reaction UTP + L-glutamine + ATP + H2O = CTP + L-glutamate + ADP + phosphate + 2 H(+). The enzyme catalyses L-glutamine + H2O = L-glutamate + NH4(+). The catalysed reaction is UTP + NH4(+) + ATP = CTP + ADP + phosphate + 2 H(+). It functions in the pathway pyrimidine metabolism; CTP biosynthesis via de novo pathway; CTP from UDP: step 2/2. Allosterically activated by GTP, when glutamine is the substrate; GTP has no effect on the reaction when ammonia is the substrate. The allosteric effector GTP functions by stabilizing the protein conformation that binds the tetrahedral intermediate(s) formed during glutamine hydrolysis. Inhibited by the product CTP, via allosteric rather than competitive inhibition. Catalyzes the ATP-dependent amination of UTP to CTP with either L-glutamine or ammonia as the source of nitrogen. Regulates intracellular CTP levels through interactions with the four ribonucleotide triphosphates. This is CTP synthase from Mycolicibacterium gilvum (strain PYR-GCK) (Mycobacterium gilvum (strain PYR-GCK)).